The primary structure comprises 500 residues: Lysine--tRNA ligase (500 aa).

E410 and E417 together coordinate Mg(2+).

It belongs to the class-II aminoacyl-tRNA synthetase family. Homodimer. Requires Mg(2+) as cofactor.

Its subcellular location is the cytoplasm. The enzyme catalyses tRNA(Lys) + L-lysine + ATP = L-lysyl-tRNA(Lys) + AMP + diphosphate. This Shewanella baltica (strain OS155 / ATCC BAA-1091) protein is Lysine--tRNA ligase.